The primary structure comprises 360 residues: UDP-arabinopyranose mutase 2 (360 aa).

Val2 is modified (N-acetylvaline). The DXD motif motif lies at 110–112 (DDD). A glycan (N-linked (Glc...) arginine) is linked at Arg158.

This sequence belongs to the RGP family. Heteromers with RGP1, RGP4 and RGP5. It depends on Mn(2+) as a cofactor. Requires Mg(2+) as cofactor. Reversibly glycosylated in vitro by UDP-glucose, UDP-xylose and UDP-galactose, but not UDP-mannose. Predominantly expressed in shoot and root apical meristems. Expressed in epidermal cells of leaves, inflorescence stems and seed coat. Expressed in pollen.

Its subcellular location is the cytoplasm. The protein resides in the cytosol. The protein localises to the golgi apparatus. It carries out the reaction UDP-beta-L-arabinofuranose = UDP-beta-L-arabinopyranose. UDP-L-arabinose mutase involved in the biosynthesis of cell wall non-cellulosic polysaccharides. Catalyzes the interconvertion of UDP-L-arabinopyranose (UDP-Arap) and UDP-L-arabinofuranose (UDP-Araf) in vitro. Preferentially catalyzes the formation of UDP-Arap from UDP-Araf. At thermodynamic equilibrium in vitro the ratio of the pyranose form over the furanose form is 95:5. Is not active on other UDP-sugars (UDP-Gal, UDP-Xyl, UDP-Glc, GDP-Man and GDP-Fuc). Functions redundantly with RGP2 and is essential for proper cell walls and pollen development. Probably involved in the formation of the pectocellulosic cell wall layer intine. Is probably active as heteromer in vivo. The polypeptide is UDP-arabinopyranose mutase 2 (Arabidopsis thaliana (Mouse-ear cress)).